We begin with the raw amino-acid sequence, 304 residues long: Olfactory receptor 8G2 (304 aa).

Residues 1–41 lie on the Extracellular side of the membrane; that stretch reads MVFLSSVETDQRKMSAGNHSSVTEFILAGLSEQPELQLRLF. N-linked (GlcNAc...) asparagine glycosylation occurs at Asn18. The chain crosses the membrane as a helical span at residues 42–62; it reads LLFLGIYVVTVVGNLSMITLI. Topologically, residues 63 to 69 are cytoplasmic; the sequence is GLSSHLH. Residues 70–90 traverse the membrane as a helical segment; it reads TPMYYFLSGLSFIDLCHSTII. Over 91-110 the chain is Extracellular; sequence TPKMLVNFVTEKNIISYPEC. Cysteines 110 and 192 form a disulfide. A helical membrane pass occupies residues 111–130; that stretch reads MTQLYFFLIFAIAECHMLAV. Topologically, residues 131-154 are cytoplasmic; the sequence is TAYDRYVAICSPLLYNVIMSYHHC. A helical membrane pass occupies residues 155–175; that stretch reads FWLTVGVYVLGILGSTIHTGF. Residues 176-193 are Extracellular-facing; sequence MLRLFLCKTNVINHYFCD. The helical transmembrane segment at 194–214 threads the bilayer; it reads LFPLLGLSCSSTYINELLVLV. The Cytoplasmic segment spans residues 215 to 217; that stretch reads LSA. Residues 218 to 238 traverse the membrane as a helical segment; that stretch reads FNILTPALTILASYIFIIASI. The Extracellular portion of the chain corresponds to 239–257; it reads LRIRSTEGRSKAFSTCSSH. Residues 258 to 278 traverse the membrane as a helical segment; it reads ILAVAVFFGSAAFMYLQPSSV. The Cytoplasmic portion of the chain corresponds to 279-304; the sequence is SSMDQRKVSSVFYTTIVPMLNPQSIA.

It belongs to the G-protein coupled receptor 1 family.

It is found in the cell membrane. In terms of biological role, odorant receptor. In Homo sapiens (Human), this protein is Olfactory receptor 8G2.